Here is a 90-residue protein sequence, read N- to C-terminus: FMRFamide-like neuropeptides 27 (90 aa).

A signal peptide spans 1 to 24; sequence MFSFRKFLAFMLIVIALMASFSSA. Residues 25-36 constitute a propeptide that is removed on maturation; it reads QPIDEERPIFME. Residue Phe-61 is modified to Phenylalanine amide. The propeptide occupies 65–90; the sequence is SSSPSDISMAELRAIYGGGPVEYVQL.

This sequence belongs to the FARP (FMRFamide related peptide) family.

It localises to the secreted. Functionally, FMRFamides and FMRFamide-like peptides are neuropeptides. This chain is FMRFamide-like neuropeptides 27, found in Caenorhabditis briggsae.